We begin with the raw amino-acid sequence, 95 residues long: Small ribosomal subunit protein bS16 (95 aa).

This sequence belongs to the bacterial ribosomal protein bS16 family.

The chain is Small ribosomal subunit protein bS16 from Thermotoga maritima (strain ATCC 43589 / DSM 3109 / JCM 10099 / NBRC 100826 / MSB8).